Reading from the N-terminus, the 638-residue chain is Sodium- and chloride-dependent glycine transporter 1 (638 aa).

The disordered stretch occupies residues 1–29 (MAAAQGPVAPSSLEQNGAVPSEATKKDQN). Residues 1-40 (MAAAQGPVAPSSLEQNGAVPSEATKKDQNLKRGNWGNQIE) are Cytoplasmic-facing. 3 consecutive transmembrane segments (helical) span residues 41–61 (FVLT…FPYL), 69–88 (AFMF…LFFM), and 112–132 (GVGY…NVVI). Topologically, residues 133–219 (CIAFYYFFSS…DDIGNFGEVR (87 aa)) are extracellular. 4 N-linked (GlcNAc...) asparagine glycosylation sites follow: N169, N172, N182, and N188. The next 9 helical transmembrane spans lie at 220-238 (LPLL…LCLI), 247-264 (VVYF…ILFI), 300-317 (IFYS…MASY), 329-350 (VIIS…FSIL), 383-402 (LPIS…LLGL), 431-449 (YVTL…PLTS), 465-485 (SFSL…IYGH), 506-525 (ICWR…FSVI), and 544-562 (IGFL…YALF). At 563-638 (QFCRTDGDTL…GSSRFQDSRI (76 aa)) the chain is on the cytoplasmic side. Residues 597–638 (RYAPTTTPSPEDGLEVQPLHPDKAQIPMVGSNGSSRFQDSRI) form a disordered region. T603 is modified (phosphothreonine). Phosphoserine is present on residues S605 and S630. Residues 627 to 638 (SNGSSRFQDSRI) form an essential for interaction with EXOC1 region. Polar residues predominate over residues 627–638 (SNGSSRFQDSRI).

This sequence belongs to the sodium:neurotransmitter symporter (SNF) (TC 2.A.22) family. SLC6A9 subfamily. In terms of assembly, interacts with EXOC1; interaction increases the transporter capacity of SLC6A9 probably by promoting its insertion into the cell membrane. Interacts with EXOC3 and EXOC4.

Its subcellular location is the cell membrane. It catalyses the reaction glycine(out) + chloride(out) + 2 Na(+)(out) = glycine(in) + chloride(in) + 2 Na(+)(in). Functionally, sodium- and chloride-dependent glycine transporter which is essential for regulating glycine concentrations at inhibitory glycinergic synapses. The polypeptide is Sodium- and chloride-dependent glycine transporter 1 (SLC6A9) (Bos taurus (Bovine)).